A 182-amino-acid chain; its full sequence is Crossover junction endodeoxyribonuclease RuvC (182 aa).

Catalysis depends on residues D7, E67, and D139. D7, E67, and D139 together coordinate Mg(2+).

It belongs to the RuvC family. As to quaternary structure, homodimer which binds Holliday junction (HJ) DNA. The HJ becomes 2-fold symmetrical on binding to RuvC with unstacked arms; it has a different conformation from HJ DNA in complex with RuvA. In the full resolvosome a probable DNA-RuvA(4)-RuvB(12)-RuvC(2) complex forms which resolves the HJ. Mg(2+) is required as a cofactor.

The protein resides in the cytoplasm. It catalyses the reaction Endonucleolytic cleavage at a junction such as a reciprocal single-stranded crossover between two homologous DNA duplexes (Holliday junction).. The RuvA-RuvB-RuvC complex processes Holliday junction (HJ) DNA during genetic recombination and DNA repair. Endonuclease that resolves HJ intermediates. Cleaves cruciform DNA by making single-stranded nicks across the HJ at symmetrical positions within the homologous arms, yielding a 5'-phosphate and a 3'-hydroxyl group; requires a central core of homology in the junction. The consensus cleavage sequence is 5'-(A/T)TT(C/G)-3'. Cleavage occurs on the 3'-side of the TT dinucleotide at the point of strand exchange. HJ branch migration catalyzed by RuvA-RuvB allows RuvC to scan DNA until it finds its consensus sequence, where it cleaves and resolves the cruciform DNA. The chain is Crossover junction endodeoxyribonuclease RuvC from Bordetella petrii (strain ATCC BAA-461 / DSM 12804 / CCUG 43448).